Consider the following 354-residue polypeptide: Decorin (354 aa).

A signal peptide spans Met1 to Ala16. A propeptide spanning residues Gly17–Glu30 is cleaved from the precursor. Ser34 carries an O-linked (Xyl...) (glycosaminoglycan) serine glycan. 2 disulfides stabilise this stretch: Cys49–Cys55 and Cys53–Cys62. LRR repeat units follow at residues Asp68–Ile88, Thr89–Ile112, Ser113–Leu136, Lys137–Ile157, Thr158–Leu181, Lys182–Ile207, Thr208–Ile228, Ala229–Ile252, Thr253–Leu276, Leu277–Ile299, Ser300–Val329, and Arg330–Lys354. N-linked (GlcNAc...) asparagine glycosylation is present at Asn206. 3 N-linked (GlcNAc...) asparagine glycosylation sites follow: Asn241, Asn257, and Asn298. The cysteines at positions 308 and 341 are disulfide-linked.

Belongs to the small leucine-rich proteoglycan (SLRP) family. SLRP class I subfamily. As to quaternary structure, binds to type I and type II collagen, fibronectin and TGF-beta. Forms a ternary complex with MFAP2 and ELN. Interacts with DPT. Post-translationally, the attached glycosaminoglycan chain can be either chondroitin sulfate or dermatan sulfate depending upon the tissue of origin.

It localises to the secreted. The protein localises to the extracellular space. It is found in the extracellular matrix. Functionally, may affect the rate of fibrils formation. May be implicated in the dilatation of the rat cervix. This chain is Decorin (Dcn), found in Rattus norvegicus (Rat).